The sequence spans 1236 residues: ATP-dependent helicase/nuclease subunit A (1236 aa).

A UvrD-like helicase ATP-binding domain is found at 2–457 (AHWTIEQEEA…VDLNKNFRSH (456 aa)). Residue 23 to 30 (AAAGSGKT) coordinates ATP. In terms of domain architecture, UvrD-like helicase C-terminal spans 515–816 (NTAKRVEICI…RIMSIHKSKG (302 aa)).

This sequence belongs to the helicase family. AddA subfamily. In terms of assembly, heterodimer of AddA and AddB/RexB. The cofactor is Mg(2+).

It carries out the reaction Couples ATP hydrolysis with the unwinding of duplex DNA by translocating in the 3'-5' direction.. It catalyses the reaction ATP + H2O = ADP + phosphate + H(+). Functionally, the heterodimer acts as both an ATP-dependent DNA helicase and an ATP-dependent, dual-direction single-stranded exonuclease. Recognizes the chi site generating a DNA molecule suitable for the initiation of homologous recombination. The AddA nuclease domain is required for chi fragment generation; this subunit has the helicase and 3' -&gt; 5' nuclease activities. This is ATP-dependent helicase/nuclease subunit A from Syntrophomonas wolfei subsp. wolfei (strain DSM 2245B / Goettingen).